Here is a 192-residue protein sequence, read N- to C-terminus: MKLLEEFIQEKGTVLPGNVLKVDAFLNHQIDPGLMQEMGKAFAERFKDLGITKIVTIESSGIAPAVFAGLALSVPVVFARKKKSVTLTDNLYTSTVYSYTKKKSNDISVSKQFLTDADTILVIDDFLANGQAALGLLEIAELAGAKVAGIGIVIEKSFQQGRELLNKTGIPVYSLARIASLENEEILFLEEE.

The xanthine site is built by Leu20 and Asn27. A 5-phospho-alpha-D-ribose 1-diphosphate-binding site is contributed by 128-132 (ANGQA). Lys156 is a xanthine binding site.

It belongs to the purine/pyrimidine phosphoribosyltransferase family. Xpt subfamily. As to quaternary structure, homodimer.

The protein resides in the cytoplasm. The enzyme catalyses XMP + diphosphate = xanthine + 5-phospho-alpha-D-ribose 1-diphosphate. The protein operates within purine metabolism; XMP biosynthesis via salvage pathway; XMP from xanthine: step 1/1. Converts the preformed base xanthine, a product of nucleic acid breakdown, to xanthosine 5'-monophosphate (XMP), so it can be reused for RNA or DNA synthesis. This Listeria innocua serovar 6a (strain ATCC BAA-680 / CLIP 11262) protein is Xanthine phosphoribosyltransferase.